We begin with the raw amino-acid sequence, 136 residues long: MSQILAMLPDSLVAKWNVVVSVAALFNTVQSFLTPKLTKRVYSNTNEVNGLQGRTFGIWTLLSAIVRFYCAYHITNPDVYFLCQCTYYLACFHFLSEWLLFRTTNLGPGLLSPIVVSTVSIWFMAKEKASILGIAA.

A run of 4 helical transmembrane segments spans residues 18 to 34 (VVVS…SFLT), 56 to 72 (FGIW…YCAY), 79 to 95 (VYFL…FHFL), and 109 to 125 (GLLS…WFMA).

Belongs to the ERG28 family. As to quaternary structure, heterotetramer of erg25, erg26, erg27 and erg28. Erg28 acts as a scaffold to tether erg27 and other 4,4-demethylation-related enzymes, forming a demethylation enzyme complex, in the endoplasmic reticulum.

It is found in the endoplasmic reticulum membrane. Its pathway is steroid metabolism; ergosterol biosynthesis. In terms of biological role, part of the third module of ergosterol biosynthesis pathway that includes by the late steps of the pathway. Erg28 has a role as a scaffold to help anchor the catalytic components of the C-4 demethylation complex erg25, erg26 and erg27 to the endoplasmic reticulum. The third module or late pathway involves the ergosterol synthesis itself through consecutive reactions that mainly occur in the endoplasmic reticulum (ER) membrane. Firstly, the squalene synthase erg9 catalyzes the condensation of 2 farnesyl pyrophosphate moieties to form squalene, which is the precursor of all steroids. Secondly, squalene is converted into lanosterol by the consecutive action of the squalene epoxidase erg1 and the lanosterol synthase erg7. The lanosterol 14-alpha-demethylase erg11/cyp1 catalyzes C14-demethylation of lanosterol to produce 4,4'-dimethyl cholesta-8,14,24-triene-3-beta-ol. In the next steps, a complex process involving various demethylation, reduction and desaturation reactions catalyzed by the C-14 reductase erg24 and the C-4 demethylation complex erg25-erg26-erg27 leads to the production of zymosterol. Erg28 likely functions in the C-4 demethylation complex reaction by tethering erg26 and Erg27 to the endoplasmic reticulum or to facilitate interaction between these proteins. Then, the sterol 24-C-methyltransferase erg6 catalyzes the methyl transfer from S-adenosyl-methionine to the C-24 of zymosterol to form fecosterol. The C-8 sterol isomerase erg2 catalyzes the reaction which results in unsaturation at C-7 in the B ring of sterols and thus converts fecosterol to episterol. The sterol-C5-desaturases erg31 and erg32 then catalyze the introduction of a C-5 double bond in the B ring to produce 5-dehydroepisterol. The C-22 sterol desaturase erg5 further converts 5-dehydroepisterol into ergosta-5,7,22,24(28)-tetraen-3beta-ol by forming the C-22(23) double bond in the sterol side chain. Finally, ergosta-5,7,22,24(28)-tetraen-3beta-ol is substrate of the C-24(28) sterol reductase erg4 to produce ergosterol. In the genus Schizosaccharomyces, a second route exists between lanosterol and fecosterol, via the methylation of lanosterol to eburicol by erg6, followed by C14-demethylation by erg11/cyp1 and C4-demethylation by the demethylation complex erg25-erg26-erg27. Its function is as follows. Extends the chronological lifespan when overexpressed. The polypeptide is Ergosterol biosynthetic protein 28 (Schizosaccharomyces pombe (strain 972 / ATCC 24843) (Fission yeast)).